Reading from the N-terminus, the 243-residue chain is Ribonuclease 3 (243 aa).

An RNase III domain is found at 19 to 144; that stretch reads FNTLHKLLGF…LVGAIYLDRG (126 aa). A Mg(2+)-binding site is contributed by glutamate 61. The active site involves aspartate 65. Mg(2+) is bound by residues asparagine 130 and glutamate 133. Glutamate 133 is an active-site residue. Residues 172–240 enclose the DRBM domain; sequence SYKSLLIEWC…SKRAYYALQN (69 aa).

Belongs to the ribonuclease III family. As to quaternary structure, homodimer. Mg(2+) is required as a cofactor.

The protein localises to the cytoplasm. The catalysed reaction is Endonucleolytic cleavage to 5'-phosphomonoester.. Its function is as follows. Digests double-stranded RNA. Involved in the processing of primary rRNA transcript to yield the immediate precursors to the large and small rRNAs (23S and 16S). Processes some mRNAs, and tRNAs when they are encoded in the rRNA operon. Processes pre-crRNA and tracrRNA of type II CRISPR loci if present in the organism. This is Ribonuclease 3 (rnc) from Zunongwangia profunda (strain DSM 18752 / CCTCC AB 206139 / SM-A87) (Wangia profunda).